Consider the following 119-residue polypeptide: Large ribosomal subunit protein bL17 (119 aa).

Belongs to the bacterial ribosomal protein bL17 family. As to quaternary structure, part of the 50S ribosomal subunit. Contacts protein L32.

The sequence is that of Large ribosomal subunit protein bL17 from Mycoplasma mycoides subsp. mycoides SC (strain CCUG 32753 / NCTC 10114 / PG1).